Here is a 267-residue protein sequence, read N- to C-terminus: Neuferricin (267 aa).

A signal peptide spans Met1–Thr17. The region spanning Leu53–Ile150 is the Cytochrome b5 heme-binding domain.

This sequence belongs to the cytochrome b5 family. MAPR subfamily.

The protein localises to the secreted. Its function is as follows. Heme-binding protein which promotes neuronal but not astrocyte differentiation. The chain is Neuferricin (cyb5d2) from Danio rerio (Zebrafish).